The following is a 1161-amino-acid chain: Nardilysin (1161 aa).

An N-terminal signal peptide occupies residues 1–18 (MLRRVAVAAVFATGRKLR). 2 disordered regions span residues 42-105 (KPFP…KSPS) and 130-218 (VEGK…KKTT). Phosphoserine occurs at positions 85, 91, and 93. Positions 138–209 (TDEEEEEEEE…EENELEELEE (72 aa)) are enriched in acidic residues. H244 is a binding site for Zn(2+). E247 (proton acceptor) is an active-site residue. 2 residues coordinate Zn(2+): H248 and E325.

This sequence belongs to the peptidase M16 family. As to quaternary structure, interacts with BACE1 and NRG1. It depends on Zn(2+) as a cofactor. Testis, and in a lower level in brain, heart and adrenal glands.

The protein resides in the mitochondrion. Its subcellular location is the cell projection. The protein localises to the dendrite. It carries out the reaction Hydrolysis of polypeptides, preferably at -Xaa-|-Arg-Lys-, and less commonly at -Arg-|-Arg-Xaa-, in which Xaa is not Arg or Lys.. Cleaves peptide substrates on the N-terminus of arginine residues in dibasic pairs. Is a critical activator of BACE1- and ADAM17-mediated pro-neuregulin ectodomain shedding, involved in the positive regulation of axonal maturation and myelination. Required for proper functioning of 2-oxoglutarate dehydrogenase (OGDH). The chain is Nardilysin from Rattus norvegicus (Rat).